Reading from the N-terminus, the 95-residue chain is MEENIINLIDENGVESQFEIILTLEAEGKEYAILMPLDDEEAEEALIFRIDEDEEGEILIPLESDEEYETVVAVYTAIMEEEGLNYDEDESNGLN.

This sequence belongs to the UPF0473 family.

The polypeptide is UPF0473 protein CD630_12860 (Clostridioides difficile (strain 630) (Peptoclostridium difficile)).